The chain runs to 190 residues: Spermatogenesis-associated protein 12 (190 aa).

As to expression, expressed in testis.

The protein is Spermatogenesis-associated protein 12 (SPATA12) of Homo sapiens (Human).